We begin with the raw amino-acid sequence, 522 residues long: Cytochrome P450 714C2 (522 aa).

Residues 1-11 (MELFSSQQWLA) lie on the Lumenal side of the membrane. Residues 12–32 (LLPPIILCILLFSYVYIILWL) traverse the membrane as a helical; Signal-anchor for type III membrane protein segment. The Cytoplasmic portion of the chain corresponds to 33-522 (RPERLRQKLR…KGVPLIFREL (490 aa)). Cysteine 470 contributes to the heme binding site.

The protein belongs to the cytochrome P450 family. Heme serves as cofactor.

It localises to the membrane. Its function is as follows. Probably not involved in gibberellin metabolism since over-expression of CYP714C2 in a heterologous system does not induce semi-dwarfism. This chain is Cytochrome P450 714C2 (CYP714C2), found in Oryza sativa subsp. japonica (Rice).